We begin with the raw amino-acid sequence, 306 residues long: MSLKLQASNVTNKNDPKSINSRVFIGNLNTALVKKSDVETIFSKYGRVAGCSVHKGYAFVQYSNERHARAAVLGENGRVLAGQTLDINMAGEPKPDRPKGLKRAASAIYSGYIFDYDYYRDDFYDRLFDYRGRLSPVPVPRAVPVKRPRVTVPLVRRVKTNVPVKLFARSTAVTTSSAKIKLKSSELQAIKTELTQIKSNIDALLSRLEQIAAEQKANPDGKKKGDGGGAGGGGGGGGSGGGGSGGGGGGGSSRPPAPQENTTSEAGLPQGEARTRDDGDEEGLLTHSEEELEHSQDTDADDGALQ.

N-acetylserine is present on Ser2. Residue Lys4 forms a Glycyl lysine isopeptide (Lys-Gly) (interchain with G-Cter in SUMO2) linkage. The 72-residue stretch at 21-92 (SRVFIGNLNT…QTLDINMAGE (72 aa)) folds into the RRM domain. Residue Lys44 is modified to N6-acetyllysine. At Ser63 the chain carries Phosphoserine. Residues Lys94 and Lys99 each participate in a glycyl lysine isopeptide (Lys-Gly) (interchain with G-Cter in SUMO2) cross-link. Ser106 and Ser135 each carry phosphoserine. Lys159 is covalently cross-linked (Glycyl lysine isopeptide (Lys-Gly) (interchain with G-Cter in SUMO2)). The residue at position 165 (Lys165) is an N6-acetyllysine; alternate. Lys165 participates in a covalent cross-link: Glycyl lysine isopeptide (Lys-Gly) (interchain with G-Cter in SUMO2); alternate. Residues Lys179 and Lys191 each participate in a glycyl lysine isopeptide (Lys-Gly) (interchain with G-Cter in SUMO2) cross-link. The stretch at 183-216 (KSSELQAIKTELTQIKSNIDALLSRLEQIAAEQK) forms a coiled coil. The tract at residues 215-306 (QKANPDGKKK…DTDADDGALQ (92 aa)) is disordered. Residues 217–226 (ANPDGKKKGD) show a composition bias toward basic and acidic residues. The span at 227–252 (GGGAGGGGGGGGSGGGGSGGGGGGGS) shows a compositional bias: gly residues. The epitope (recognized by BKRF1 antibodies) stretch occupies residues 227–253 (GGGAGGGGGGGGSGGGGSGGGGGGGSS). Residue Thr262 is modified to Phosphothreonine. A Phosphoserine modification is found at Ser264. Phosphothreonine is present on Thr286. Residues 287–297 (HSEEELEHSQD) show a composition bias toward basic and acidic residues. A phosphoserine mark is found at Ser288 and Ser295. A Phosphothreonine modification is found at Thr298.

Belongs to the RRM HNRPC family. RALY subfamily. In terms of assembly, identified in the spliceosome C complex. Interacts (through its RNA-binding domain) with FUS (through its RNA-binding domain); both are components of the same RNPs. Expressed in heart, brain, lung, liver, skeletal muscle, kidney and pancreas. Weakly expressed in placenta.

It localises to the nucleus. Functionally, RNA-binding protein that acts as a transcriptional cofactor for cholesterol biosynthetic genes in the liver. Binds the lipid-responsive non-coding RNA LeXis and is required for LeXis-mediated effect on cholesterogenesis. May be a heterogeneous nuclear ribonucleoprotein (hnRNP). The sequence is that of RNA-binding protein Raly (RALY) from Homo sapiens (Human).